Consider the following 388-residue polypeptide: 2-epi-5-epi-valiolone synthase (388 aa).

NAD(+)-binding positions include 92–95 (ERNK), 124–128 (GIVAD), 148–149 (TT), Lys-161, Lys-170, and 188–191 (LLAT). 3 residues coordinate Zn(2+): Glu-203, His-267, and His-283.

It belongs to the sugar phosphate cyclases superfamily. EEVS-like family. The cofactor is NAD(+). It depends on Co(2+) as a cofactor. Requires Zn(2+) as cofactor.

The enzyme catalyses D-sedoheptulose 7-phosphate = 2-epi-5-epi-valiolone + phosphate. Catalyzes the cyclization of D-sedoheptulose 7-phosphate to 2-epi-5-epi-valiolone. Probably involved in acarbose biosynthesis. The polypeptide is 2-epi-5-epi-valiolone synthase (Streptomyces glaucescens).